A 402-amino-acid polypeptide reads, in one-letter code: NADH-quinone oxidoreductase subunit D (402 aa).

This sequence belongs to the complex I 49 kDa subunit family. As to quaternary structure, NDH-1 is composed of 14 different subunits. Subunits NuoB, C, D, E, F, and G constitute the peripheral sector of the complex.

Its subcellular location is the cell inner membrane. The enzyme catalyses a quinone + NADH + 5 H(+)(in) = a quinol + NAD(+) + 4 H(+)(out). NDH-1 shuttles electrons from NADH, via FMN and iron-sulfur (Fe-S) centers, to quinones in the respiratory chain. The immediate electron acceptor for the enzyme in this species is believed to be ubiquinone. Couples the redox reaction to proton translocation (for every two electrons transferred, four hydrogen ions are translocated across the cytoplasmic membrane), and thus conserves the redox energy in a proton gradient. The sequence is that of NADH-quinone oxidoreductase subunit D from Azorhizobium caulinodans (strain ATCC 43989 / DSM 5975 / JCM 20966 / LMG 6465 / NBRC 14845 / NCIMB 13405 / ORS 571).